Reading from the N-terminus, the 197-residue chain is MFERELEALGFEKTGDLIKIVPPDLFAELCQQSVQHLQRQRSGVDCHAIFQSFQAVGVHISEDELRKIIRGMTALFSTAAKYNVTCEELLSMLISKLPKQILQVIRHVWNEEGKHLCELQKSRDLLPSGELVDFHWKIGMAVSSDSCRSLNHPYVTVELKVADYSGQITSKILELTIPEFKNFHKQFKEMSAVLETV.

A COMM domain is found at 130-197 (ELVDFHWKIG…KEMSAVLETV (68 aa)).

The protein belongs to the COMM domain-containing protein 6 family. Component of the commander complex consisting of the CCC subcomplex and the retriever subcomplex. Component of the CCC subcomplex.

Its subcellular location is the nucleus. It is found in the cytoplasm. Its function is as follows. Scaffold protein in the commander complex that is essential for endosomal recycling of transmembrane cargos; the commander complex is composed of the CCC subcomplex and the retriever subcomplex. May modulate activity of cullin-RING E3 ubiquitin ligase (CRL) complexes. Down-regulates activation of NF-kappa-B. Inhibits TNF-induced NFKB1 activation. This chain is COMM domain-containing protein 6 (commd6), found in Xenopus laevis (African clawed frog).